A 99-amino-acid chain; its full sequence is Small ribosomal subunit protein bS20 (99 aa).

The protein belongs to the bacterial ribosomal protein bS20 family.

Binds directly to 16S ribosomal RNA. In Synechococcus sp. (strain CC9311), this protein is Small ribosomal subunit protein bS20.